Reading from the N-terminus, the 904-residue chain is Eukaryotic translation initiation factor 3 subunit C (904 aa).

Disordered regions lie at residues 1 to 38 (MSRFFAGGSESDSDSSSDSEPIQRQTAPQFTFSDEEED) and 156 to 290 (FRES…TSEK). Polar residues predominate over residues 22–32 (IQRQTAPQFTF). A compositionally biased stretch (acidic residues) spans 161 to 183 (DAADDEDEEEEKKEEEESDDEEA). The span at 194 to 206 (FKKDTVEKVKVEK) shows a compositional bias: basic and acidic residues. A compositionally biased stretch (acidic residues) spans 207–232 (DDDDSDDSIDWGQDSDSDESSSEEEA). Positions 237-247 (IRERFLKRPEK) are enriched in basic and acidic residues. Residues 257 to 272 (KEKKKTKETKDSRKKK) show a composition bias toward basic residues. The 177-residue stretch at 636-812 (FHMHINLELL…ETVVLHRSEP (177 aa)) folds into the PCI domain. Residues 847-904 (RGGNQGYNRDRQNYRNQNQNRENWNNNRRQDRGNRNRNQNRDREQREQHRVEFEEKAE) form a disordered region. Residues 860–873 (YRNQNQNRENWNNN) show a composition bias toward low complexity. A compositionally biased stretch (basic and acidic residues) spans 874 to 904 (RRQDRGNRNRNQNRDREQREQHRVEFEEKAE).

Belongs to the eIF-3 subunit C family. As to quaternary structure, component of the eukaryotic translation initiation factor 3 (eIF-3) complex.

It is found in the cytoplasm. In terms of biological role, component of the eukaryotic translation initiation factor 3 (eIF-3) complex, which is involved in protein synthesis of a specialized repertoire of mRNAs and, together with other initiation factors, stimulates binding of mRNA and methionyl-tRNAi to the 40S ribosome. The eIF-3 complex specifically targets and initiates translation of a subset of mRNAs involved in cell proliferation. This is Eukaryotic translation initiation factor 3 subunit C from Culex quinquefasciatus (Southern house mosquito).